The chain runs to 436 residues: 3-ketoacyl-CoA thiolase (436 aa).

Catalysis depends on Cys99, which acts as the Acyl-thioester intermediate. Active-site proton acceptor residues include His392 and Cys422.

Belongs to the thiolase-like superfamily. Thiolase family. Heterotetramer of two alpha chains (FadJ) and two beta chains (FadI).

It is found in the cytoplasm. The catalysed reaction is an acyl-CoA + acetyl-CoA = a 3-oxoacyl-CoA + CoA. Its pathway is lipid metabolism; fatty acid beta-oxidation. In terms of biological role, catalyzes the final step of fatty acid oxidation in which acetyl-CoA is released and the CoA ester of a fatty acid two carbons shorter is formed. The chain is 3-ketoacyl-CoA thiolase from Salmonella typhimurium (strain LT2 / SGSC1412 / ATCC 700720).